The following is a 259-amino-acid chain: Caffeoyl-CoA O-methyltransferase (259 aa).

Lys33 contributes to the substrate binding site. Residues Thr75, Glu97, 99–100 (GV), Ser105, Asp123, and Ala152 each bind S-adenosyl-L-methionine. Asp175 contributes to the substrate binding site. A divalent metal cation is bound at residue Asp175. An S-adenosyl-L-methionine-binding site is contributed by Asp177. The a divalent metal cation site is built by Asp201 and Asn202. A substrate-binding site is contributed by Asn206.

The protein belongs to the class I-like SAM-binding methyltransferase superfamily. Cation-dependent O-methyltransferase family. CCoAMT subfamily. It depends on a divalent metal cation as a cofactor.

The enzyme catalyses (E)-caffeoyl-CoA + S-adenosyl-L-methionine = (E)-feruloyl-CoA + S-adenosyl-L-homocysteine + H(+). Its pathway is aromatic compound metabolism; phenylpropanoid biosynthesis. Methylates caffeoyl-CoA to feruloyl-CoA and 5-hydroxyferuloyl-CoA to sinapoyl-CoA. Plays a role in the synthesis of feruloylated polysaccharides. Involved in the reinforcement of the plant cell wall. Also involved in the responding to wounding or pathogen challenge by the increased formation of cell wall-bound ferulic acid polymers. This is Caffeoyl-CoA O-methyltransferase (CCOAOMT) from Pinus taeda (Loblolly pine).